Consider the following 119-residue polypeptide: Beta-2-microglobulin (119 aa).

The N-terminal stretch at Met-1–Ala-20 is a signal peptide. In terms of domain architecture, Ig-like C1-type spans Pro-25 to Lys-114. An intrachain disulfide couples Cys-45 to Cys-100.

This sequence belongs to the beta-2-microglobulin family. In terms of assembly, heterodimer of an alpha chain and a beta chain. Beta-2-microglobulin is the beta-chain of major histocompatibility complex class I molecules.

It is found in the secreted. In terms of biological role, component of the class I major histocompatibility complex (MHC). Involved in the presentation of peptide antigens to the immune system. The chain is Beta-2-microglobulin (B2M) from Saimiri boliviensis boliviensis (Bolivian squirrel monkey).